We begin with the raw amino-acid sequence, 142 residues long: Putative pre-16S rRNA nuclease (142 aa).

It belongs to the YqgF nuclease family.

Its subcellular location is the cytoplasm. Its function is as follows. Could be a nuclease involved in processing of the 5'-end of pre-16S rRNA. The protein is Putative pre-16S rRNA nuclease of Lactobacillus delbrueckii subsp. bulgaricus (strain ATCC 11842 / DSM 20081 / BCRC 10696 / JCM 1002 / NBRC 13953 / NCIMB 11778 / NCTC 12712 / WDCM 00102 / Lb 14).